Here is a 331-residue protein sequence, read N- to C-terminus: Probable transcriptional regulatory protein At2g25830 (331 aa).

It belongs to the TACO1 family.

The protein is Probable transcriptional regulatory protein At2g25830 of Arabidopsis thaliana (Mouse-ear cress).